Here is a 343-residue protein sequence, read N- to C-terminus: UDP-3-O-acylglucosamine N-acyltransferase (343 aa).

The active-site Proton acceptor is His-245.

The protein belongs to the transferase hexapeptide repeat family. LpxD subfamily. In terms of assembly, homotrimer.

It catalyses the reaction a UDP-3-O-[(3R)-3-hydroxyacyl]-alpha-D-glucosamine + a (3R)-hydroxyacyl-[ACP] = a UDP-2-N,3-O-bis[(3R)-3-hydroxyacyl]-alpha-D-glucosamine + holo-[ACP] + H(+). The protein operates within bacterial outer membrane biogenesis; LPS lipid A biosynthesis. Functionally, catalyzes the N-acylation of UDP-3-O-acylglucosamine using 3-hydroxyacyl-ACP as the acyl donor. Is involved in the biosynthesis of lipid A, a phosphorylated glycolipid that anchors the lipopolysaccharide to the outer membrane of the cell. The polypeptide is UDP-3-O-acylglucosamine N-acyltransferase (Phenylobacterium zucineum (strain HLK1)).